A 189-amino-acid polypeptide reads, in one-letter code: Probable nicotinate-nucleotide adenylyltransferase (189 aa).

The protein belongs to the NadD family.

It catalyses the reaction nicotinate beta-D-ribonucleotide + ATP + H(+) = deamido-NAD(+) + diphosphate. It functions in the pathway cofactor biosynthesis; NAD(+) biosynthesis; deamido-NAD(+) from nicotinate D-ribonucleotide: step 1/1. In terms of biological role, catalyzes the reversible adenylation of nicotinate mononucleotide (NaMN) to nicotinic acid adenine dinucleotide (NaAD). This Cereibacter sphaeroides (strain ATCC 17023 / DSM 158 / JCM 6121 / CCUG 31486 / LMG 2827 / NBRC 12203 / NCIMB 8253 / ATH 2.4.1.) (Rhodobacter sphaeroides) protein is Probable nicotinate-nucleotide adenylyltransferase.